We begin with the raw amino-acid sequence, 38 residues long: Photosystem II reaction center protein L (38 aa).

Residues 17–37 traverse the membrane as a helical segment; sequence SLYWGLLLIFVLAVLFSNYFF.

The protein belongs to the PsbL family. PSII is composed of 1 copy each of membrane proteins PsbA, PsbB, PsbC, PsbD, PsbE, PsbF, PsbH, PsbI, PsbJ, PsbK, PsbL, PsbM, PsbT, PsbX, PsbY, PsbZ, Psb30/Ycf12, at least 3 peripheral proteins of the oxygen-evolving complex and a large number of cofactors. It forms dimeric complexes.

The protein resides in the plastid. Its subcellular location is the chloroplast thylakoid membrane. Its function is as follows. One of the components of the core complex of photosystem II (PSII). PSII is a light-driven water:plastoquinone oxidoreductase that uses light energy to abstract electrons from H(2)O, generating O(2) and a proton gradient subsequently used for ATP formation. It consists of a core antenna complex that captures photons, and an electron transfer chain that converts photonic excitation into a charge separation. This subunit is found at the monomer-monomer interface and is required for correct PSII assembly and/or dimerization. This chain is Photosystem II reaction center protein L, found in Angiopteris evecta (Mule's foot fern).